Here is a 560-residue protein sequence, read N- to C-terminus: Formate--tetrahydrofolate ligase (560 aa).

69–76 lines the ATP pocket; sequence TPAGEGKS.

Belongs to the formate--tetrahydrofolate ligase family.

It catalyses the reaction (6S)-5,6,7,8-tetrahydrofolate + formate + ATP = (6R)-10-formyltetrahydrofolate + ADP + phosphate. It participates in one-carbon metabolism; tetrahydrofolate interconversion. This Listeria monocytogenes serovar 1/2a (strain ATCC BAA-679 / EGD-e) protein is Formate--tetrahydrofolate ligase.